Here is a 303-residue protein sequence, read N- to C-terminus: Ribosomal RNA small subunit methyltransferase H (303 aa).

Residues 33–35 (GGH), D52, F78, D99, and Q106 each bind S-adenosyl-L-methionine.

Belongs to the methyltransferase superfamily. RsmH family.

It is found in the cytoplasm. It catalyses the reaction cytidine(1402) in 16S rRNA + S-adenosyl-L-methionine = N(4)-methylcytidine(1402) in 16S rRNA + S-adenosyl-L-homocysteine + H(+). In terms of biological role, specifically methylates the N4 position of cytidine in position 1402 (C1402) of 16S rRNA. In Phytoplasma australiense, this protein is Ribosomal RNA small subunit methyltransferase H.